Here is a 191-residue protein sequence, read N- to C-terminus: Signal peptidase IB (191 aa).

Residues 1–7 (MKKELLE) lie on the Cytoplasmic side of the membrane. The helical transmembrane segment at 8–28 (WIISIAVAFVILFIVGKFIVT) threads the bilayer. Over 29 to 191 (PYTIKGESMD…YNFNPENTKN (163 aa)) the chain is Extracellular. Active-site residues include Ser36 and Lys77.

It belongs to the peptidase S26 family.

The protein resides in the cell membrane. The catalysed reaction is Cleavage of hydrophobic, N-terminal signal or leader sequences from secreted and periplasmic proteins.. Essential for cell viability. The protein is Signal peptidase IB (spsB) of Staphylococcus aureus (strain MRSA252).